Here is a 466-residue protein sequence, read N- to C-terminus: Glutamate--tRNA ligase (466 aa).

A 'HIGH' region motif is present at residues 10-20 (PSPTGYLHVGG). Residues cysteine 99, cysteine 101, cysteine 126, and histidine 128 each coordinate Zn(2+). Residues 237 to 241 (RLSKR) carry the 'KMSKS' region motif. Lysine 240 contacts ATP.

This sequence belongs to the class-I aminoacyl-tRNA synthetase family. Glutamate--tRNA ligase type 1 subfamily. In terms of assembly, monomer. Zn(2+) serves as cofactor.

The protein resides in the cytoplasm. The enzyme catalyses tRNA(Glu) + L-glutamate + ATP = L-glutamyl-tRNA(Glu) + AMP + diphosphate. Functionally, catalyzes the attachment of glutamate to tRNA(Glu) in a two-step reaction: glutamate is first activated by ATP to form Glu-AMP and then transferred to the acceptor end of tRNA(Glu). This chain is Glutamate--tRNA ligase, found in Trichlorobacter lovleyi (strain ATCC BAA-1151 / DSM 17278 / SZ) (Geobacter lovleyi).